Here is a 167-residue protein sequence, read N- to C-terminus: Transmembrane protein 229B (167 aa).

The Cytoplasmic segment spans residues 1–14 (MASAEPLTALSRWY). A helical membrane pass occupies residues 15–35 (LYAIHGYFCEVMFTAAWEFVV). At 36–40 (NFNWK) the chain is on the extracellular side. Residues 41-61 (FPGVTSVWALFIYGTSILIVE) form a helical membrane-spanning segment. Residues 62 to 73 (RMYLRLRGRCPL) are Cytoplasmic-facing. Residues 74-94 (LVRCVIYTLWTYLWEFTTGFI) traverse the membrane as a helical segment. At 95–109 (LRQFNACPWDYSQFD) the chain is on the extracellular side. The helical transmembrane segment at 110-130 (FDFMGLITLEYAVPWFCGALI) threads the bilayer. Over 131-167 (MEQFIIRNTLRLRFDKDAEPGEPASPPALANGHVKTD) the chain is Cytoplasmic. The disordered stretch occupies residues 148-167 (AEPGEPASPPALANGHVKTD).

The protein belongs to the TMEM229 family.

The protein localises to the membrane. The polypeptide is Transmembrane protein 229B (TMEM229B) (Mus musculus (Mouse)).